A 116-amino-acid chain; its full sequence is Large ribosomal subunit protein uL18 (116 aa).

The protein belongs to the universal ribosomal protein uL18 family. Part of the 50S ribosomal subunit; part of the 5S rRNA/L5/L18/L25 subcomplex. Contacts the 5S and 23S rRNAs.

In terms of biological role, this is one of the proteins that bind and probably mediate the attachment of the 5S RNA into the large ribosomal subunit, where it forms part of the central protuberance. The chain is Large ribosomal subunit protein uL18 from Alcanivorax borkumensis (strain ATCC 700651 / DSM 11573 / NCIMB 13689 / SK2).